We begin with the raw amino-acid sequence, 299 residues long: Peroxisomal biogenesis factor 19 (299 aa).

Residues 1–63 form a disordered region; sequence MAAAEGDGGV…SPGDTAKDAL (63 aa). Ala2 carries the post-translational modification N-acetylalanine. Residues 2 to 56 are docking to the peroxisome membrane and binding to PEX3; the sequence is AAAEGDGGVRAEADRELEELLESALDDFDKAKPSPAPPPTTTAPDASGPQKRSPG. The segment at 2–91 is necessary for PEX19 function on peroxisome biogenesis; that stretch reads AAAEGDGGVR…QATAEFEKAM (90 aa). The segment covering 16–27 has biased composition (acidic residues); sequence RELEELLESALD. Residues Ser35, Ser54, and Ser66 each carry the phosphoserine modification. Thr236 carries the post-translational modification Phosphothreonine. The residue at position 296 (Cys296) is a Cysteine methyl ester. The S-farnesyl cysteine moiety is linked to residue Cys296. Residues 297 to 299 constitute a propeptide, removed in mature form; the sequence is LIM.

This sequence belongs to the peroxin-19 family. Interacts with a broad range of peroxisomal membrane proteins, including PEX3, PEX10, PEX11A, PEX11B, PEX12, PEX13, PEX14 and PEX16, PXMP2/PMP22, PXMP4/PMP24, SLC25A17/PMP34, ABCD1/ALDP, ABCD2/ALDRP, and ABCD3/PMP70. Also interacts with the tumor suppressor CDKN2A/p19ARF.

The protein localises to the cytoplasm. Its subcellular location is the peroxisome membrane. Functionally, necessary for early peroxisomal biogenesis. Acts both as a cytosolic chaperone and as an import receptor for peroxisomal membrane proteins (PMPs). Binds and stabilizes newly synthesized PMPs in the cytoplasm by interacting with their hydrophobic membrane-spanning domains, and targets them to the peroxisome membrane by binding to the integral membrane protein PEX3. Excludes CDKN2A from the nucleus and prevents its interaction with MDM2, which results in active degradation of TP53. In Bos taurus (Bovine), this protein is Peroxisomal biogenesis factor 19 (PEX19).